Consider the following 983-residue polypeptide: Probable beta-galactosidase C (983 aa).

The N-terminal stretch at 1–23 is a signal peptide; it reads MRIFSFLFLLLLGILTGQGLVSG. The substrate site is built by tyrosine 82, asparagine 127, alanine 128, glutamate 129, and asparagine 187. Catalysis depends on glutamate 188, which acts as the Proton donor. Asparagine 197 is a glycosylation site (N-linked (GlcNAc...) asparagine). Position 251 (tyrosine 251) interacts with substrate. Residues cysteine 257 and cysteine 304 are joined by a disulfide bond. An N-linked (GlcNAc...) asparagine glycan is attached at asparagine 276. The active-site Nucleophile is glutamate 287. Position 353 (tyrosine 353) interacts with substrate. 9 N-linked (GlcNAc...) asparagine glycosylation sites follow: asparagine 391, asparagine 434, asparagine 466, asparagine 516, asparagine 601, asparagine 676, asparagine 714, asparagine 719, and asparagine 804.

The protein belongs to the glycosyl hydrolase 35 family.

Its subcellular location is the secreted. The enzyme catalyses Hydrolysis of terminal non-reducing beta-D-galactose residues in beta-D-galactosides.. Its function is as follows. Cleaves beta-linked terminal galactosyl residues from gangliosides, glycoproteins, and glycosaminoglycans. The sequence is that of Probable beta-galactosidase C (lacC) from Neosartorya fischeri (strain ATCC 1020 / DSM 3700 / CBS 544.65 / FGSC A1164 / JCM 1740 / NRRL 181 / WB 181) (Aspergillus fischerianus).